Reading from the N-terminus, the 225-residue chain is UPF0758 protein SZO_09140 (225 aa).

Residues 102–224 (PVLSSAQVAE…YYSFREKSDL (123 aa)) form the MPN domain. Zn(2+) is bound by residues H173, H175, and D186. Residues 173 to 186 (HNHPSGLTKPSAND) carry the JAMM motif motif.

The protein belongs to the UPF0758 family.

The chain is UPF0758 protein SZO_09140 from Streptococcus equi subsp. zooepidemicus (strain H70).